We begin with the raw amino-acid sequence, 406 residues long: Vitamin D3 dihydroxylase (406 aa).

Low complexity predominate over residues 1-15 (MTDTATTPQTTDAPA). The tract at residues 1-24 (MTDTATTPQTTDAPAFPSNRSCPY) is disordered. Calciol is bound at residue Thr-81. Positions 103 and 107 each coordinate heme. Calciol contacts are provided by Arg-193, Ser-236, and Ile-293. Positions 297, 353, and 355 each coordinate heme.

Belongs to the cytochrome P450 family. Heme serves as cofactor.

The protein resides in the cytoplasm. It carries out the reaction calciol + 2 reduced [2Fe-2S]-[ferredoxin] + O2 + 2 H(+) = calcidiol + 2 oxidized [2Fe-2S]-[ferredoxin] + H2O. The catalysed reaction is calcidiol + 2 reduced [2Fe-2S]-[ferredoxin] + O2 + 2 H(+) = calcitriol + 2 oxidized [2Fe-2S]-[ferredoxin] + H2O. Involved in the metabolism of vitamin D3 (calciol) and of a number of sulfonylurea herbicides. Catalyzes the two-step hydroxylation (25- and 1-alpha-hydroxylation) of vitamin D3 (VD3) to yield its active form 1-alpha,25-dihydroxyvitamin D3 (calcitriol). The first step is the hydroxylation of the C-25 position of VD3 to produce 25-hydroxyvitamin D3 (calcidiol). The second reaction is the hydroxylation of the C1-alpha-position of calcidiol to produce calcitriol. It can also hydroxylate vitamin D2. The chain is Vitamin D3 dihydroxylase from Streptomyces griseolus.